A 276-amino-acid chain; its full sequence is Small ribosomal subunit protein uS3 (276 aa).

The 69-residue stretch at 38–106 folds into the KH type-2 domain; that stretch reads IRRMMTKGME…QVQLNILEVK (69 aa). A compositionally biased stretch (low complexity) spans 216 to 228; it reads NAAARAGNRPARG. Positions 216–276 are disordered; sequence NAAARAGNRP…PAAESTGTEA (61 aa). Residues 229 to 245 are compositionally biased toward basic and acidic residues; sequence GADRPAGRGGRGGERGG. Positions 254 to 269 are enriched in low complexity; the sequence is PAAEAPKADAAAAPAA.

Belongs to the universal ribosomal protein uS3 family. As to quaternary structure, part of the 30S ribosomal subunit. Forms a tight complex with proteins S10 and S14.

Binds the lower part of the 30S subunit head. Binds mRNA in the 70S ribosome, positioning it for translation. In Streptomyces griseus subsp. griseus (strain JCM 4626 / CBS 651.72 / NBRC 13350 / KCC S-0626 / ISP 5235), this protein is Small ribosomal subunit protein uS3.